The sequence spans 596 residues: Structural protein precursor VP8 (596 aa).

It is found in the virion. In terms of biological role, 120 subunits of the putative clamp protein VP8b appear to stabilize the capsid shell. The polypeptide is Structural protein precursor VP8 (Oryza latifolia (Indian wild rice)).